Reading from the N-terminus, the 254-residue chain is 3-deoxy-manno-octulosonate cytidylyltransferase (254 aa).

This sequence belongs to the KdsB family.

It is found in the cytoplasm. The enzyme catalyses 3-deoxy-alpha-D-manno-oct-2-ulosonate + CTP = CMP-3-deoxy-beta-D-manno-octulosonate + diphosphate. Its pathway is nucleotide-sugar biosynthesis; CMP-3-deoxy-D-manno-octulosonate biosynthesis; CMP-3-deoxy-D-manno-octulosonate from 3-deoxy-D-manno-octulosonate and CTP: step 1/1. It participates in bacterial outer membrane biogenesis; lipopolysaccharide biosynthesis. Its function is as follows. Activates KDO (a required 8-carbon sugar) for incorporation into bacterial lipopolysaccharide in Gram-negative bacteria. This Pseudomonas syringae pv. syringae (strain B728a) protein is 3-deoxy-manno-octulosonate cytidylyltransferase.